Consider the following 714-residue polypeptide: Polyribonucleotide nucleotidyltransferase (714 aa).

Residues Asp-487 and Asp-493 each contribute to the Mg(2+) site. Residues 554–613 (PRIETLKIPTDKIREVIGTGGKVIREIVEKTGAKINIEDDGTVKVASSDGNSIKAAIAWI) enclose the KH domain. Residues 623–691 (GQIYEGTVVK…DRGKVRLSMR (69 aa)) form the S1 motif domain.

The protein belongs to the polyribonucleotide nucleotidyltransferase family. Requires Mg(2+) as cofactor.

Its subcellular location is the cytoplasm. The catalysed reaction is RNA(n+1) + phosphate = RNA(n) + a ribonucleoside 5'-diphosphate. Functionally, involved in mRNA degradation. Catalyzes the phosphorolysis of single-stranded polyribonucleotides processively in the 3'- to 5'-direction. In Methylocella silvestris (strain DSM 15510 / CIP 108128 / LMG 27833 / NCIMB 13906 / BL2), this protein is Polyribonucleotide nucleotidyltransferase.